Consider the following 89-residue polypeptide: Small ribosomal subunit protein uS15 (89 aa).

The protein belongs to the universal ribosomal protein uS15 family. As to quaternary structure, part of the 30S ribosomal subunit. Forms a bridge to the 50S subunit in the 70S ribosome, contacting the 23S rRNA.

One of the primary rRNA binding proteins, it binds directly to 16S rRNA where it helps nucleate assembly of the platform of the 30S subunit by binding and bridging several RNA helices of the 16S rRNA. Functionally, forms an intersubunit bridge (bridge B4) with the 23S rRNA of the 50S subunit in the ribosome. This chain is Small ribosomal subunit protein uS15, found in Staphylococcus epidermidis (strain ATCC 12228 / FDA PCI 1200).